Reading from the N-terminus, the 690-residue chain is Serotransferrin-1 (690 aa).

The N-terminal stretch at 1–18 (MKLLLLSALLGCLATAYA) is a signal peptide. 2 Transferrin-like domains span residues 25 to 329 (VKWC…SLKK) and 340 to 669 (IKWC…SLRK). C28 and C50 are joined by a disulfide. D74 and Y104 together coordinate Fe(3+). Disulfide bonds link C127–C207, C172–C186, and C235–C249. Positions 129, 134, 136, and 137 each coordinate hydrogencarbonate. Residue N169 is glycosylated (N-linked (GlcNAc...) asparagine). Y201 is a Fe(3+) binding site. H257 contacts Fe(3+). 2 cysteine pairs are disulfide-bonded: C343/C379 and C353/C370. Fe(3+)-binding residues include D394 and Y428. 7 disulfides stabilise this stretch: C404/C681, C419/C642, C451/C529, C475/C670, C485/C499, C496/C512, and C569/C583. T453, R457, A459, and G460 together coordinate hydrogencarbonate. Y523 contacts Fe(3+). A Fe(3+)-binding site is contributed by H591.

Belongs to the transferrin family. Monomer. In terms of tissue distribution, abundant in liver and serum with smaller amounts found in the stomach and kidney.

The protein resides in the secreted. In terms of biological role, transferrins are iron binding transport proteins which can bind two Fe(3+) ions in association with the binding of an anion, usually bicarbonate. It is responsible for the transport of iron from sites of absorption and heme degradation to those of storage and utilization. Serum transferrin may also have a further role in stimulating cell proliferation. The chain is Serotransferrin-1 (tf1) from Salmo salar (Atlantic salmon).